A 124-amino-acid polypeptide reads, in one-letter code: Fluoride-specific ion channel FluC (124 aa).

Helical transmembrane passes span 4-24, 35-55, 70-90, and 95-115; these read ILFV…ISIF, FGTL…YALG, VGLL…LLLI, and WLKA…MVYL. The Na(+) site is built by Gly74 and Thr77.

Belongs to the fluoride channel Fluc/FEX (TC 1.A.43) family.

The protein localises to the cell inner membrane. The enzyme catalyses fluoride(in) = fluoride(out). With respect to regulation, na(+) is not transported, but it plays an essential structural role and its presence is essential for fluoride channel function. Functionally, fluoride-specific ion channel. Important for reducing fluoride concentration in the cell, thus reducing its toxicity. This Shewanella woodyi (strain ATCC 51908 / MS32) protein is Fluoride-specific ion channel FluC.